We begin with the raw amino-acid sequence, 497 residues long: Putative BTB/POZ domain-containing protein R738 (497 aa).

One can recognise a BTB domain in the interval 16–86 (SDCKLVLDDG…FYEKSNVINA (71 aa)).

This sequence belongs to the mimivirus BTB/WD family.

The sequence is that of Putative BTB/POZ domain-containing protein R738 from Acanthamoeba polyphaga (Amoeba).